Reading from the N-terminus, the 103-residue chain is Large ribosomal subunit protein bL21 (103 aa).

It belongs to the bacterial ribosomal protein bL21 family. In terms of assembly, part of the 50S ribosomal subunit. Contacts protein L20.

Functionally, this protein binds to 23S rRNA in the presence of protein L20. The polypeptide is Large ribosomal subunit protein bL21 (Desulfotalea psychrophila (strain LSv54 / DSM 12343)).